The chain runs to 102 residues: Co-chaperonin GroES (102 aa).

Belongs to the GroES chaperonin family. As to quaternary structure, heptamer of 7 subunits arranged in a ring. Interacts with the chaperonin GroEL.

The protein resides in the cytoplasm. Functionally, together with the chaperonin GroEL, plays an essential role in assisting protein folding. The GroEL-GroES system forms a nano-cage that allows encapsulation of the non-native substrate proteins and provides a physical environment optimized to promote and accelerate protein folding. GroES binds to the apical surface of the GroEL ring, thereby capping the opening of the GroEL channel. The sequence is that of Co-chaperonin GroES from Streptomyces albus G.